Here is a 613-residue protein sequence, read N- to C-terminus: Dihydroxy-acid dehydratase (613 aa).

Asp81 is a binding site for Mg(2+). A [2Fe-2S] cluster-binding site is contributed by Cys122. Positions 123 and 124 each coordinate Mg(2+). An N6-carboxylysine modification is found at Lys124. Cys197 serves as a coordination point for [2Fe-2S] cluster. Glu493 provides a ligand contact to Mg(2+). The Proton acceptor role is filled by Ser519.

This sequence belongs to the IlvD/Edd family. Homodimer. [2Fe-2S] cluster serves as cofactor. Mg(2+) is required as a cofactor.

It carries out the reaction (2R)-2,3-dihydroxy-3-methylbutanoate = 3-methyl-2-oxobutanoate + H2O. It catalyses the reaction (2R,3R)-2,3-dihydroxy-3-methylpentanoate = (S)-3-methyl-2-oxopentanoate + H2O. The protein operates within amino-acid biosynthesis; L-isoleucine biosynthesis; L-isoleucine from 2-oxobutanoate: step 3/4. Its pathway is amino-acid biosynthesis; L-valine biosynthesis; L-valine from pyruvate: step 3/4. Its function is as follows. Functions in the biosynthesis of branched-chain amino acids. Catalyzes the dehydration of (2R,3R)-2,3-dihydroxy-3-methylpentanoate (2,3-dihydroxy-3-methylvalerate) into 2-oxo-3-methylpentanoate (2-oxo-3-methylvalerate) and of (2R)-2,3-dihydroxy-3-methylbutanoate (2,3-dihydroxyisovalerate) into 2-oxo-3-methylbutanoate (2-oxoisovalerate), the penultimate precursor to L-isoleucine and L-valine, respectively. The protein is Dihydroxy-acid dehydratase of Corynebacterium glutamicum (strain R).